The chain runs to 75 residues: Exodeoxyribonuclease 7 small subunit (75 aa).

Belongs to the XseB family. In terms of assembly, heterooligomer composed of large and small subunits.

It is found in the cytoplasm. It carries out the reaction Exonucleolytic cleavage in either 5'- to 3'- or 3'- to 5'-direction to yield nucleoside 5'-phosphates.. In terms of biological role, bidirectionally degrades single-stranded DNA into large acid-insoluble oligonucleotides, which are then degraded further into small acid-soluble oligonucleotides. This chain is Exodeoxyribonuclease 7 small subunit, found in Chlamydia pneumoniae (Chlamydophila pneumoniae).